The following is a 144-amino-acid chain: Large ribosomal subunit protein uL16 (144 aa).

Basic residues predominate over residues 1-19; the sequence is MLLPKRVKYRRQHRPKTTG. Residues 1–26 form a disordered region; sequence MLLPKRVKYRRQHRPKTTGRSKGGNE.

Belongs to the universal ribosomal protein uL16 family. In terms of assembly, part of the 50S ribosomal subunit.

Its function is as follows. Binds 23S rRNA and is also seen to make contacts with the A and possibly P site tRNAs. The chain is Large ribosomal subunit protein uL16 from Macrococcus caseolyticus (strain JCSC5402) (Macrococcoides caseolyticum).